Consider the following 362-residue polypeptide: Adenosine deaminase (362 aa).

Residues histidine 19 and histidine 21 each coordinate Zn(2+). Substrate is bound by residues histidine 21, aspartate 23, and glycine 181. Histidine 208 is a Zn(2+) binding site. Glutamate 211 functions as the Proton donor in the catalytic mechanism. Aspartate 300 is a binding site for Zn(2+).

Belongs to the metallo-dependent hydrolases superfamily. Adenosine and AMP deaminases family. Adenosine deaminase subfamily. Zn(2+) serves as cofactor.

It catalyses the reaction adenosine + H2O + H(+) = inosine + NH4(+). The catalysed reaction is 2'-deoxyadenosine + H2O + H(+) = 2'-deoxyinosine + NH4(+). Catalyzes the hydrolytic deamination of adenosine and 2-deoxyadenosine. This is Adenosine deaminase from Mycobacterium sp. (strain JLS).